The sequence spans 398 residues: Putative F-box protein At3g17620 (398 aa).

In terms of domain architecture, F-box spans methionine 1–histidine 45.

In Arabidopsis thaliana (Mouse-ear cress), this protein is Putative F-box protein At3g17620.